The primary structure comprises 344 residues: Ribosomal RNA large subunit methyltransferase Cfr (344 aa).

The active-site Proton acceptor is the glutamate 90. The Radical SAM core domain occupies 97-330 (KQGWESFCIS…ATVRTQFGSE (234 aa)). Cysteine 104 and cysteine 335 are disulfide-bonded. [4Fe-4S] cluster contacts are provided by cysteine 111, cysteine 115, and cysteine 118. S-adenosyl-L-methionine is bound by residues 157-158 (GE), serine 188, 211-213 (SLH), and asparagine 292. Residue cysteine 335 is the S-methylcysteine intermediate of the active site.

Belongs to the radical SAM superfamily. RlmN family. Cfr subfamily. [4Fe-4S] cluster serves as cofactor.

The protein resides in the cytoplasm. The catalysed reaction is adenosine(2503) in 23S rRNA + 2 reduced [2Fe-2S]-[ferredoxin] + 2 S-adenosyl-L-methionine = 8-methyladenosine(2503) in 23S rRNA + 5'-deoxyadenosine + L-methionine + 2 oxidized [2Fe-2S]-[ferredoxin] + S-adenosyl-L-homocysteine. Its function is as follows. Specifically methylates position 8 of adenine 2503 in 23S rRNA. Confers resistance to some classes of antibiotics. This is Ribosomal RNA large subunit methyltransferase Cfr from Clostridium botulinum (strain Loch Maree / Type A3).